The chain runs to 1019 residues: Insulin-degrading enzyme (1019 aa).

H108 lines the Zn(2+) pocket. E111 (proton acceptor) is an active-site residue. Zn(2+)-binding residues include H112 and E189. Residue K192 is modified to N6-succinyllysine. Residues 336–342 and 359–363 contribute to the substrate site; these read HLIGHEG and LVGGQ. ATP is bound at residue R429. K697 is subject to N6-succinyllysine. The short motif at 853–858 is the SlyX motif element; that stretch reads EKPPHY. An ATP-binding site is contributed by 895–901; the sequence is DKPKKLS.

The protein belongs to the peptidase M16 family. Homodimer. Can also form homotetramers. As to quaternary structure, (Microbial infection) Interacts (via N-terminus) with varicella-zoster virus (VZV) envelope glycoprotein E (via N-terminus); the membrane-associated isoform may function as an entry receptor for this virus. Requires Zn(2+) as cofactor. Post-translationally, the N-terminus is blocked. In terms of tissue distribution, detected in brain and in cerebrospinal fluid (at protein level).

It localises to the cytoplasm. The protein localises to the cytosol. It is found in the cell membrane. Its subcellular location is the secreted. It carries out the reaction Degradation of insulin, glucagon and other polypeptides. No action on proteins.. Its activity is regulated as follows. Activated by small peptides. Activated by ATP and GTP, and to a lesser extent by CTP, TTP and PPPi. Inhibited by bacitracin. In vitro modification of Cys residues impairs enzyme activity. In terms of biological role, plays a role in the cellular breakdown of insulin, APP peptides, IAPP peptides, natriuretic peptides, glucagon, bradykinin, kallidin, and other peptides, and thereby plays a role in intercellular peptide signaling. Substrate binding induces important conformation changes, making it possible to bind and degrade larger substrates, such as insulin. Contributes to the regulation of peptide hormone signaling cascades and regulation of blood glucose homeostasis via its role in the degradation of insulin, glucagon and IAPP. Plays a role in the degradation and clearance of APP-derived amyloidogenic peptides that are secreted by neurons and microglia. Degrades the natriuretic peptides ANP, BNP and CNP, inactivating their ability to raise intracellular cGMP. Also degrades an aberrant frameshifted 40-residue form of NPPA (fsNPPA) which is associated with familial atrial fibrillation in heterozygous patients. Involved in antigen processing. Produces both the N terminus and the C terminus of MAGEA3-derived antigenic peptide (EVDPIGHLY) that is presented to cytotoxic T lymphocytes by MHC class I. (Microbial infection) The membrane-associated isoform acts as an entry receptor for varicella-zoster virus (VZV). This Homo sapiens (Human) protein is Insulin-degrading enzyme.